The following is a 752-amino-acid chain: DNA ligase (752 aa).

Residues 1-25 (MKRNGFVPSNSVGRRGIPSNSTSSA) form a disordered region. NAD(+) contacts are provided by residues 91 to 95 (DADFD), 140 to 141 (SL), and E170. K172 acts as the N6-AMP-lysine intermediate in catalysis. 4 residues coordinate NAD(+): R193, E233, K350, and K374. Residues C474, C477, C493, and C499 each coordinate Zn(2+). Positions 669 to 752 (STPRTLAGLT…TLLDGGPAAL (84 aa)) constitute a BRCT domain.

Belongs to the NAD-dependent DNA ligase family. LigA subfamily. It depends on Mg(2+) as a cofactor. Mn(2+) is required as a cofactor.

The catalysed reaction is NAD(+) + (deoxyribonucleotide)n-3'-hydroxyl + 5'-phospho-(deoxyribonucleotide)m = (deoxyribonucleotide)n+m + AMP + beta-nicotinamide D-nucleotide.. Its function is as follows. DNA ligase that catalyzes the formation of phosphodiester linkages between 5'-phosphoryl and 3'-hydroxyl groups in double-stranded DNA using NAD as a coenzyme and as the energy source for the reaction. It is essential for DNA replication and repair of damaged DNA. The protein is DNA ligase of Nocardioides sp. (strain ATCC BAA-499 / JS614).